Reading from the N-terminus, the 463-residue chain is Probable ECA polymerase (463 aa).

11 consecutive transmembrane segments (helical) span residues Phe-6 to Met-26, Phe-39 to Phe-59, Val-65 to Tyr-85, Ala-112 to Leu-132, Gly-154 to Leu-174, Ala-180 to Gly-200, Gly-201 to Gly-221, Trp-222 to Leu-242, Leu-340 to Ile-360, Tyr-377 to Thr-397, and Val-408 to Leu-428.

Belongs to the WzyE family. Probably part of a complex composed of WzxE, WzyE and WzzE.

The protein resides in the cell inner membrane. The protein operates within bacterial outer membrane biogenesis; enterobacterial common antigen biosynthesis. In terms of biological role, probably involved in the polymerization of enterobacterial common antigen (ECA) trisaccharide repeat units. This chain is Probable ECA polymerase, found in Pectobacterium atrosepticum (strain SCRI 1043 / ATCC BAA-672) (Erwinia carotovora subsp. atroseptica).